A 746-amino-acid chain; its full sequence is Probable ubiquitin carboxyl-terminal hydrolase MINDY-4 (746 aa).

Disordered regions lie at residues 123–179 (DDET…SEGE), 198–254 (MALG…IKGE), and 319–342 (GKGATEASPYASNEHRRRSGFSNM). Composition is skewed to polar residues over residues 141–152 (YRSQNDLQFNKS) and 165–174 (TEAGVTSTGV). The active-site Nucleophile is Cys448. The active-site Proton acceptor is His666.

The protein belongs to the MINDY deubiquitinase family. FAM188 subfamily.

It carries out the reaction Thiol-dependent hydrolysis of ester, thioester, amide, peptide and isopeptide bonds formed by the C-terminal Gly of ubiquitin (a 76-residue protein attached to proteins as an intracellular targeting signal).. In terms of biological role, probable hydrolase that can remove 'Lys-48'-linked conjugated ubiquitin from proteins. This chain is Probable ubiquitin carboxyl-terminal hydrolase MINDY-4 (mindy4), found in Xenopus tropicalis (Western clawed frog).